The sequence spans 274 residues: Rhamnulose-1-phosphate aldolase (274 aa).

Glu117 is a catalytic residue. The Zn(2+) site is built by His141, His143, and His212.

This sequence belongs to the aldolase class II family. RhaD subfamily. Homotetramer. Zn(2+) serves as cofactor.

The protein localises to the cytoplasm. The catalysed reaction is L-rhamnulose 1-phosphate = (S)-lactaldehyde + dihydroxyacetone phosphate. It functions in the pathway carbohydrate degradation; L-rhamnose degradation; glycerone phosphate from L-rhamnose: step 3/3. Its function is as follows. Catalyzes the reversible cleavage of L-rhamnulose-1-phosphate to dihydroxyacetone phosphate (DHAP) and L-lactaldehyde. This Pectobacterium carotovorum subsp. carotovorum (strain PC1) protein is Rhamnulose-1-phosphate aldolase.